We begin with the raw amino-acid sequence, 369 residues long: uncharacterized protein (369 aa).

A run of 9 helical transmembrane segments spans residues 25 to 45 (QFVA…WYDW), 47 to 67 (FCLL…FVPA), 119 to 139 (LNIV…FNLM), 152 to 172 (LSGF…FSAL), 206 to 226 (HALN…LLFV), 235 to 255 (LKPL…SLYL), 272 to 292 (PIAL…GVFG), 296 to 316 (FGIY…TVFL), and 323 to 343 (LIFF…FTVA).

This sequence to B.subtilis ComEC.

The protein resides in the cell membrane. This is an uncharacterized protein from Mycoplasma genitalium (strain ATCC 33530 / DSM 19775 / NCTC 10195 / G37) (Mycoplasmoides genitalium).